The chain runs to 376 residues: uncharacterized protein (376 aa).

An N-terminal signal peptide occupies residues 1-22; it reads MVATGRIIITLLAAALDEIILA.

The protein belongs to the ascovirus HvAV ORF17 family.

This is an uncharacterized protein from Heliothis virescens ascovirus 3e (HvAV-3e).